Reading from the N-terminus, the 390-residue chain is Magnesium-protoporphyrin IX monomethyl ester [oxidative] cyclase (390 aa).

Belongs to the AcsF family. The cofactor is Fe cation.

The enzyme catalyses Mg-protoporphyrin IX 13-monomethyl ester + 3 NADPH + 3 O2 + 2 H(+) = 3,8-divinyl protochlorophyllide a + 3 NADP(+) + 5 H2O. It functions in the pathway porphyrin-containing compound metabolism; chlorophyll biosynthesis (light-independent). Its function is as follows. Catalyzes the formation of the isocyclic ring in chlorophyll biosynthesis. Mediates the cyclase reaction, which results in the formation of divinylprotochlorophyllide (Pchlide) characteristic of all chlorophylls from magnesium-protoporphyrin IX 13-monomethyl ester (MgPMME). The polypeptide is Magnesium-protoporphyrin IX monomethyl ester [oxidative] cyclase (Prochlorococcus marinus subsp. pastoris (strain CCMP1986 / NIES-2087 / MED4)).